The following is a 504-amino-acid chain: MANAPFPKLSASLDQGRPHRVRFCPSPTGNPHVGLVRTALFNWAFARHHQGTLVFRIEDTDAARDSEESYQQLLDSMRWLGLDWDEGPEIGGPHAPYRQSQRMDLYKDVAEKLLAAGYAYPCYCTTEELDTRRDAARAAGKPSGYDGHCRDLTAEQKAAYEAEGRTSIVRFRMPDEAITFTDLVRGEITVQPENVPDYGIVRANGAPLYTLVNPVDDALMEITHVLRGEDLLSSTPRQIALYRALIELGIAKDTPAFGHLPYVMGEGNKKLSKRDPQASLNLYRERGFLPEGLLNYLSLLGWSIAEDRDIFSMDELVAAFDIKDVNANPARFDLKKCEHINAEHIRMLDVKTFTEACGPWLKAPFAPWAPEAFDAEKWTRIAPYAQTRVTVLSDITDNVDFLFLDEPVEDEASWTKAMKGDPVALLTTARANLEAADWSDPESLKNAVLTAGEAHGLKLGKAQAPVRVAVTGRTVGLPLFESLEILGRDRSLARVDAALAKLTA.

A 'HIGH' region motif is present at residues 25 to 35 (PSPTGNPHVGL). Zn(2+) is bound by residues C122, C124, C149, and D151. Residues 270–274 (KLSKR) carry the 'KMSKS' region motif. K273 is an ATP binding site.

Belongs to the class-I aminoacyl-tRNA synthetase family. Glutamate--tRNA ligase type 1 subfamily. Monomer. Zn(2+) serves as cofactor.

It is found in the cytoplasm. The catalysed reaction is tRNA(Glu) + L-glutamate + ATP = L-glutamyl-tRNA(Glu) + AMP + diphosphate. Its function is as follows. Catalyzes the attachment of glutamate to tRNA(Glu) in a two-step reaction: glutamate is first activated by ATP to form Glu-AMP and then transferred to the acceptor end of tRNA(Glu). The polypeptide is Glutamate--tRNA ligase (Streptomyces griseus subsp. griseus (strain JCM 4626 / CBS 651.72 / NBRC 13350 / KCC S-0626 / ISP 5235)).